Reading from the N-terminus, the 461-residue chain is Photosystem II CP43 reaction center protein (461 aa).

Positions 1-2 (ME) are excised as a propeptide. Position 3 is an N-acetylthreonine (T3). T3 bears the Phosphothreonine mark. The next 5 membrane-spanning stretches (helical) occupy residues 57–81 (LFEV…PHLA), 122–143 (LAGP…KRKK), 166–188 (KAMY…RSIT), 243–263 (RPSP…LSYS), and 279–300 (WFNN…ASQA). E355 lines the [CaMn4O5] cluster pocket. Residues 435–459 (RARAAAIGFEKGIDRSREIARKLKP) traverse the membrane as a helical segment.

This sequence belongs to the PsbB/PsbC family. PsbC subfamily. In terms of assembly, PSII is composed of 1 copy each of membrane proteins PsbA, PsbB, PsbC, PsbD, PsbE, PsbF, PsbH, PsbI, PsbJ, PsbK, PsbL, PsbM, PsbT, PsbY, PsbZ, Psb30/Ycf12, at least 3 peripheral proteins of the oxygen-evolving complex and a large number of cofactors. It forms dimeric complexes. Binds multiple chlorophylls and provides some of the ligands for the Ca-4Mn-5O cluster of the oxygen-evolving complex. It may also provide a ligand for a Cl- that is required for oxygen evolution. PSII binds additional chlorophylls, carotenoids and specific lipids. serves as cofactor.

Its subcellular location is the plastid. It localises to the chloroplast thylakoid membrane. Functionally, one of the components of the core complex of photosystem II (PSII). It binds chlorophyll and helps catalyze the primary light-induced photochemical processes of PSII. PSII is a light-driven water:plastoquinone oxidoreductase, using light energy to abstract electrons from H(2)O, generating O(2) and a proton gradient subsequently used for ATP formation. This chain is Photosystem II CP43 reaction center protein, found in Euglena gracilis.